The sequence spans 67 residues: Protein AaeX (67 aa).

The next 2 helical transmembrane spans lie at 10-30 (FGLSFPPVFFVLLVSLTLFFV) and 43-63 (FVWHPALFNSALFCCLFYLLF).

The protein belongs to the AaeX family.

The protein localises to the cell membrane. The polypeptide is Protein AaeX (Pectobacterium carotovorum subsp. carotovorum (strain PC1)).